The primary structure comprises 148 residues: Large ribosomal subunit protein bL9 (148 aa).

This sequence belongs to the bacterial ribosomal protein bL9 family.

Binds to the 23S rRNA. This chain is Large ribosomal subunit protein bL9, found in Chromohalobacter salexigens (strain ATCC BAA-138 / DSM 3043 / CIP 106854 / NCIMB 13768 / 1H11).